The sequence spans 212 residues: MHILVTGFAPFDNQNINPSWEAVTQLEDIIGTHTIDKLKLPTSFKKVDNIINKTLASNHYDVVLAIGQAGGRNAITPERVAINIDDARIPDNDDFQPIDQAIHLDGAPAYFSNLPVKAMTQSIINQGLPGALSNSAGTFVCNHTLYHLGYLQDKHYPHLRFGFIHVPYIPEQVIGKPDTPSMPLEKIVAGLTAAIEAISNDEDLHLALGTTE.

Residues glutamate 78, cysteine 141, and histidine 165 contribute to the active site.

This sequence belongs to the peptidase C15 family. Homotetramer.

The protein resides in the cytoplasm. It carries out the reaction Release of an N-terminal pyroglutamyl group from a polypeptide, the second amino acid generally not being Pro.. Its function is as follows. Removes 5-oxoproline from various penultimate amino acid residues except L-proline. This is Pyrrolidone-carboxylate peptidase from Staphylococcus aureus (strain NCTC 8325 / PS 47).